A 139-amino-acid chain; its full sequence is HTH-type transcriptional repressor Mb2911 (139 aa).

One can recognise an HTH marR-type domain in the interval 6–138 (DAPLGYLLYR…FKRMLEKLGS (133 aa)).

As to quaternary structure, homodimer.

In terms of biological role, represses expression of the HQNO methyltransferase htm gene by binding to its promoter region. The chain is HTH-type transcriptional repressor Mb2911 from Mycobacterium bovis (strain ATCC BAA-935 / AF2122/97).